The sequence spans 181 residues: Protein Syd (181 aa).

This sequence belongs to the Syd family.

It is found in the cell inner membrane. In terms of biological role, interacts with the SecY protein in vivo. May bind preferentially to an uncomplexed state of SecY, thus functioning either as a chelating agent for excess SecY in the cell or as a regulatory factor that negatively controls the translocase function. This chain is Protein Syd, found in Alteromonas mediterranea (strain DSM 17117 / CIP 110805 / LMG 28347 / Deep ecotype).